Reading from the N-terminus, the 224-residue chain is MTSPIYLAIDTPHLDAALTLAQKVRHHVGGLKLGLEFFCANGHHGVHEMAKLGLPIFLDLKLHDIPNTVAKAIQALRPLEPAILTVHAAGGRAMLEEAKAVAGKDTRVIAVTVLTSLDAPDLEDIGLTGTPHDQVVRLAALAREAGLDGIVCSGQEVKSARKAWPGGFFVVPGVRPANGRIGDQKRIVTPAQAMSDGASILVVGRPITQSSDPDLAAREIEATL.

Residues Asp10, Lys32, 59-68 (DLKLHDIPNT), Thr115, Arg175, Gln184, Gly204, and Arg205 each bind substrate. The active-site Proton donor is Lys61.

This sequence belongs to the OMP decarboxylase family. Type 1 subfamily. As to quaternary structure, homodimer.

It carries out the reaction orotidine 5'-phosphate + H(+) = UMP + CO2. It functions in the pathway pyrimidine metabolism; UMP biosynthesis via de novo pathway; UMP from orotate: step 2/2. Functionally, catalyzes the decarboxylation of orotidine 5'-monophosphate (OMP) to uridine 5'-monophosphate (UMP). This Sphingopyxis alaskensis (strain DSM 13593 / LMG 18877 / RB2256) (Sphingomonas alaskensis) protein is Orotidine 5'-phosphate decarboxylase.